The sequence spans 1530 residues: DNA-directed RNA polymerase III subunit RPC1 (1530 aa).

The Zn(2+) site is built by C74, C77, C84, H87, C114, C117, and C161. 3 residues coordinate Mg(2+): D503, D505, and D507. The bridging helix stretch occupies residues 846-858; that stretch reads PTEFFFHTMAGRE. Positions 992 to 1001 are enriched in basic and acidic residues; it reads EEQESREDAL. Disordered regions lie at residues 992-1016 and 1057-1099; these read EEQE…SRPR and NLLN…SKEG.

Belongs to the RNA polymerase beta' chain family. As to quaternary structure, component of the RNA polymerase III (Pol III) complex consisting of 17 subunits.

It is found in the nucleus. The enzyme catalyses RNA(n) + a ribonucleoside 5'-triphosphate = RNA(n+1) + diphosphate. In terms of biological role, DNA-dependent RNA polymerase catalyzes the transcription of DNA into RNA using the four ribonucleoside triphosphates as substrates. Largest and catalytic core component of RNA polymerase III which synthesizes small RNAs, such as 5S rRNA and tRNAs. Forms the polymerase active center together with the second largest subunit. A single-stranded DNA template strand of the promoter is positioned within the central active site cleft of Pol III. A bridging helix emanates from RPC1 and crosses the cleft near the catalytic site and is thought to promote translocation of Pol III by acting as a ratchet that moves the RNA-DNA hybrid through the active site by switching from straight to bent conformations at each step of nucleotide addition. This chain is DNA-directed RNA polymerase III subunit RPC1, found in Trypanosoma brucei brucei.